Reading from the N-terminus, the 1377-residue chain is DNA-directed RNA polymerase subunit beta (1377 aa).

This sequence belongs to the RNA polymerase beta chain family. The RNAP catalytic core consists of 2 alpha, 1 beta, 1 beta' and 1 omega subunit. When a sigma factor is associated with the core the holoenzyme is formed, which can initiate transcription.

It carries out the reaction RNA(n) + a ribonucleoside 5'-triphosphate = RNA(n+1) + diphosphate. In terms of biological role, DNA-dependent RNA polymerase catalyzes the transcription of DNA into RNA using the four ribonucleoside triphosphates as substrates. The protein is DNA-directed RNA polymerase subunit beta of Brucella suis biovar 1 (strain 1330).